A 124-amino-acid chain; its full sequence is Putative membrane protein insertion efficiency factor (124 aa).

Belongs to the UPF0161 family.

The protein localises to the cell inner membrane. In terms of biological role, could be involved in insertion of integral membrane proteins into the membrane. The sequence is that of Putative membrane protein insertion efficiency factor from Psychrobacter cryohalolentis (strain ATCC BAA-1226 / DSM 17306 / VKM B-2378 / K5).